We begin with the raw amino-acid sequence, 102 residues long: UPF0473 protein SERP1179 (102 aa).

Belongs to the UPF0473 family.

This chain is UPF0473 protein SERP1179, found in Staphylococcus epidermidis (strain ATCC 35984 / DSM 28319 / BCRC 17069 / CCUG 31568 / BM 3577 / RP62A).